The sequence spans 338 residues: Nicotinate-nucleotide--dimethylbenzimidazole phosphoribosyltransferase (338 aa).

Glu305 functions as the Proton acceptor in the catalytic mechanism.

This sequence belongs to the CobT family.

The catalysed reaction is 5,6-dimethylbenzimidazole + nicotinate beta-D-ribonucleotide = alpha-ribazole 5'-phosphate + nicotinate + H(+). It participates in nucleoside biosynthesis; alpha-ribazole biosynthesis; alpha-ribazole from 5,6-dimethylbenzimidazole: step 1/2. Catalyzes the synthesis of alpha-ribazole-5'-phosphate from nicotinate mononucleotide (NAMN) and 5,6-dimethylbenzimidazole (DMB). This Rhizobium meliloti (strain 1021) (Ensifer meliloti) protein is Nicotinate-nucleotide--dimethylbenzimidazole phosphoribosyltransferase.